The following is a 185-amino-acid chain: Ribosome-recycling factor (185 aa).

The segment at 137-162 is disordered; that stretch reads DSIDKMVKDGEVGEDEGRRAEKELDD.

Belongs to the RRF family.

Its subcellular location is the cytoplasm. Functionally, responsible for the release of ribosomes from messenger RNA at the termination of protein biosynthesis. May increase the efficiency of translation by recycling ribosomes from one round of translation to another. The sequence is that of Ribosome-recycling factor from Streptomyces coelicolor (strain ATCC BAA-471 / A3(2) / M145).